The primary structure comprises 469 residues: Zinc finger and BTB domain-containing protein 8A.1-B (469 aa).

The 69-residue stretch at 24-92 (CDCHIIVEGQ…VYSGKLPLSG (69 aa)) folds into the BTB domain. 2 consecutive C2H2-type zinc fingers follow at residues 315–337 (FKCPFCTHTVKRKADLKRHLRCH) and 343–366 (YPCEACGKRFTRLEHLRNHFQTIH).

It localises to the nucleus. Functionally, may be involved in transcriptional regulation. This chain is Zinc finger and BTB domain-containing protein 8A.1-B (zbtb8a.1-b), found in Xenopus laevis (African clawed frog).